Reading from the N-terminus, the 313-residue chain is N-acetyl-gamma-glutamyl-phosphate reductase (313 aa).

The active site involves cysteine 117.

This sequence belongs to the NAGSA dehydrogenase family. Type 2 subfamily.

It localises to the cytoplasm. It catalyses the reaction N-acetyl-L-glutamate 5-semialdehyde + phosphate + NADP(+) = N-acetyl-L-glutamyl 5-phosphate + NADPH + H(+). Its pathway is amino-acid biosynthesis; L-arginine biosynthesis; N(2)-acetyl-L-ornithine from L-glutamate: step 3/4. Functionally, catalyzes the NADPH-dependent reduction of N-acetyl-5-glutamyl phosphate to yield N-acetyl-L-glutamate 5-semialdehyde. The protein is N-acetyl-gamma-glutamyl-phosphate reductase of Burkholderia orbicola (strain MC0-3).